The primary structure comprises 303 residues: Methionyl-tRNA formyltransferase (303 aa).

106-109 lines the (6S)-5,6,7,8-tetrahydrofolate pocket; the sequence is SLLP.

Belongs to the Fmt family.

The catalysed reaction is L-methionyl-tRNA(fMet) + (6R)-10-formyltetrahydrofolate = N-formyl-L-methionyl-tRNA(fMet) + (6S)-5,6,7,8-tetrahydrofolate + H(+). Attaches a formyl group to the free amino group of methionyl-tRNA(fMet). The formyl group appears to play a dual role in the initiator identity of N-formylmethionyl-tRNA by promoting its recognition by IF2 and preventing the misappropriation of this tRNA by the elongation apparatus. The protein is Methionyl-tRNA formyltransferase of Thermosipho melanesiensis (strain DSM 12029 / CIP 104789 / BI429).